The following is a 76-amino-acid chain: Adipogenesis regulatory factor (76 aa).

Expressed in adipose tissue (at protein level). Highly expressed in omental and subcutaneous adipose tissues. Expressed in heart, cornea, liver, kidney and spleen.

The protein localises to the nucleus. Plays a role in fat cell development; promotes adipogenic differentiation and stimulates transcription initiation of master adipogenesis factors like PPARG and CEBPA at early stages of preadipocyte differentiation. Its overexpression confers resistance to the anticancer chemotherapeutic drug cisplatin. The polypeptide is Adipogenesis regulatory factor (ADIRF) (Homo sapiens (Human)).